A 261-amino-acid chain; its full sequence is 1-(5-phosphoribosyl)-5-[(5-phosphoribosylamino)methylideneamino] imidazole-4-carboxamide isomerase (261 aa).

Catalysis depends on aspartate 15, which acts as the Proton acceptor. Catalysis depends on aspartate 136, which acts as the Proton donor.

This sequence belongs to the HisA/HisF family.

The protein localises to the cytoplasm. It catalyses the reaction 1-(5-phospho-beta-D-ribosyl)-5-[(5-phospho-beta-D-ribosylamino)methylideneamino]imidazole-4-carboxamide = 5-[(5-phospho-1-deoxy-D-ribulos-1-ylimino)methylamino]-1-(5-phospho-beta-D-ribosyl)imidazole-4-carboxamide. The protein operates within amino-acid biosynthesis; L-histidine biosynthesis; L-histidine from 5-phospho-alpha-D-ribose 1-diphosphate: step 4/9. In Synechococcus sp. (strain JA-2-3B'a(2-13)) (Cyanobacteria bacterium Yellowstone B-Prime), this protein is 1-(5-phosphoribosyl)-5-[(5-phosphoribosylamino)methylideneamino] imidazole-4-carboxamide isomerase.